A 110-amino-acid chain; its full sequence is NADH-quinone oxidoreductase subunit K (110 aa).

The next 3 membrane-spanning stretches (helical) occupy residues 13–33, 41–61, and 73–93; these read LNHY…GLFM, ILMS…AFSV, and IIIL…LLIY.

This sequence belongs to the complex I subunit 4L family. In terms of assembly, NDH-1 is composed of 14 different subunits. Subunits NuoA, H, J, K, L, M, N constitute the membrane sector of the complex.

It localises to the cell inner membrane. The enzyme catalyses a quinone + NADH + 5 H(+)(in) = a quinol + NAD(+) + 4 H(+)(out). Its function is as follows. NDH-1 shuttles electrons from NADH, via FMN and iron-sulfur (Fe-S) centers, to quinones in the respiratory chain. The immediate electron acceptor for the enzyme in this species is believed to be ubiquinone. Couples the redox reaction to proton translocation (for every two electrons transferred, four hydrogen ions are translocated across the cytoplasmic membrane), and thus conserves the redox energy in a proton gradient. This chain is NADH-quinone oxidoreductase subunit K, found in Rickettsia prowazekii (strain Madrid E).